A 362-amino-acid chain; its full sequence is Phospho-2-dehydro-3-deoxyheptonate aldolase (362 aa).

This sequence belongs to the class-I DAHP synthase family.

The catalysed reaction is D-erythrose 4-phosphate + phosphoenolpyruvate + H2O = 7-phospho-2-dehydro-3-deoxy-D-arabino-heptonate + phosphate. Its pathway is metabolic intermediate biosynthesis; chorismate biosynthesis; chorismate from D-erythrose 4-phosphate and phosphoenolpyruvate: step 1/7. In terms of biological role, stereospecific condensation of phosphoenolpyruvate (PEP) and D-erythrose-4-phosphate (E4P) giving rise to 3-deoxy-D-arabino-heptulosonate-7-phosphate (DAHP). This Haemophilus influenzae (strain ATCC 51907 / DSM 11121 / KW20 / Rd) protein is Phospho-2-dehydro-3-deoxyheptonate aldolase (aroG).